Here is a 180-residue protein sequence, read N- to C-terminus: F17 fimbrial protein (180 aa).

The signal sequence occupies residues Met-1–Ala-21. Cysteines 37 and 77 form a disulfide.

This sequence belongs to the fimbrial protein family.

Its subcellular location is the fimbrium. In terms of biological role, fimbriae (also called pili), polar filaments radiating from the surface of the bacterium to a length of 0.5-1.5 micrometers and numbering 100-300 per cell, enable bacteria to colonize the epithelium of specific host organs. This chain is F17 fimbrial protein (F17a-A), found in Escherichia coli.